A 638-amino-acid polypeptide reads, in one-letter code: uncharacterized protein (638 aa).

Residues 1–138 (MDLVELDYLS…KIENALLKYK (138 aa)) form the CID domain. Disordered stretches follow at residues 318-338 (QPPL…YSLS) and 615-638 (LGKR…QESK).

This is an uncharacterized protein from Schizosaccharomyces pombe (strain 972 / ATCC 24843) (Fission yeast).